Reading from the N-terminus, the 210-residue chain is Transmembrane protein 61 (210 aa).

Transmembrane regions (helical) follow at residues Tyr18–Trp38 and Val69–Val89. The interval Val140–Trp172 is disordered.

The protein resides in the membrane. The protein is Transmembrane protein 61 (TMEM61) of Homo sapiens (Human).